The following is a 172-amino-acid chain: Protein GrpE (172 aa).

The disordered stretch occupies residues 1–23 (MNQDHPECDSEELTQNSPETDPL).

This sequence belongs to the GrpE family. As to quaternary structure, homodimer.

Its subcellular location is the cytoplasm. Its function is as follows. Participates actively in the response to hyperosmotic and heat shock by preventing the aggregation of stress-denatured proteins, in association with DnaK and GrpE. It is the nucleotide exchange factor for DnaK and may function as a thermosensor. Unfolded proteins bind initially to DnaJ; upon interaction with the DnaJ-bound protein, DnaK hydrolyzes its bound ATP, resulting in the formation of a stable complex. GrpE releases ADP from DnaK; ATP binding to DnaK triggers the release of the substrate protein, thus completing the reaction cycle. Several rounds of ATP-dependent interactions between DnaJ, DnaK and GrpE are required for fully efficient folding. The polypeptide is Protein GrpE (Xylella fastidiosa (strain M23)).